The chain runs to 384 residues: Cell division protein FtsZ (384 aa).

GTP-binding positions include 20–24 (GGGSN), 107–109 (GTG), glutamate 138, arginine 142, and asparagine 186.

This sequence belongs to the FtsZ family. In terms of assembly, homodimer. Polymerizes to form a dynamic ring structure in a strictly GTP-dependent manner. Interacts directly with several other division proteins.

Its subcellular location is the cytoplasm. Essential cell division protein that forms a contractile ring structure (Z ring) at the future cell division site. The regulation of the ring assembly controls the timing and the location of cell division. One of the functions of the FtsZ ring is to recruit other cell division proteins to the septum to produce a new cell wall between the dividing cells. Binds GTP and shows GTPase activity. The protein is Cell division protein FtsZ of Buchnera aphidicola subsp. Acyrthosiphon pisum (strain APS) (Acyrthosiphon pisum symbiotic bacterium).